Consider the following 130-residue polypeptide: Interferon alpha-inducible protein 27-like protein 2 (130 aa).

Helical transmembrane passes span Ala-8–Phe-28, Met-43–Leu-63, and Val-66–Leu-86. A disordered region spans residues Ser-93–Glu-130.

It belongs to the IFI6/IFI27 family.

The protein resides in the mitochondrion membrane. In terms of biological role, plays a role in the apoptotic process and has a pro-apoptotic activity. This is Interferon alpha-inducible protein 27-like protein 2 from Homo sapiens (Human).